We begin with the raw amino-acid sequence, 68 residues long: MEC1-mediated checkpoint protein HUG1 (68 aa).

It is found in the cytoplasm. The protein localises to the nucleus. Functionally, involved in the MEC1-mediated checkpoint response to DNA damage and replication arrest. The polypeptide is MEC1-mediated checkpoint protein HUG1 (HUG1) (Saccharomyces cerevisiae (strain ATCC 204508 / S288c) (Baker's yeast)).